The sequence spans 539 residues: Cytochrome P450 monooxygenase tenB (539 aa).

The helical transmembrane segment at 13 to 33 threads the bilayer; it reads LGYYEKVAGVLGFLSIALLFW. The disordered stretch occupies residues 439–460; it reads PFRFSRASKDDDDDGKSTSSHA. Cysteine 481 lines the heme pocket.

It belongs to the cytochrome P450 family. Requires heme as cofactor.

The protein resides in the membrane. The protein operates within secondary metabolite biosynthesis. In terms of biological role, cytochrome P450 monooxygenase; part of the gene cluster that mediates the biosynthesis of tenellin-type 2-pyridones, iron-chelating compounds involved in iron stress tolerance, competition with the natural competitor fungus Metarhizium robertsii and insect hosts infection. TenB catalyzes the selective N-hydroxylation of the 2-pyridone nitrogen of yield tellinin and 15-hydroxytellenin (15-HT), respectively. The pathway begins with the assembly of the polyketide-amino acid backbone by the hybrid PKS-NRPS tenS with the help of the enoyl reductase tenC. These enzymes catalyze the synthesis of the pyrrolidine-2-dione intermediates pretellinin A, 11-hydropretellenin A, 12-hydropretellenin A, 13-hydropretellenin A, 14-hydropretellenin A, 12-oxopretellenin A and prototellinin D. The cytochrome P450 monooxygenase tenA then catalyzes an oxidative ring expansion of pretenellin A and 14-hydropretellenin A to form the 2-pyridone core, leading to pretenellin B and pyridovericin, respectively. The cytochrome P450 monooxygenase tenB is then required for the selective N-hydroxylation of the 2-pyridone nitrogen of yield tellinin and 15-hydroxytellenin (15-HT), respectively. The UDP-glucosyltransferase GT1 and the methyltransferase MT1, located outside the tenS gene cluster, contribute to the stepwise glycosylation and methylation of 15-HT to obtain the glycoside pyridovericin-N-O-(4-O-methyl-beta-D-glucopyranoside) (PMGP). Additional related compounds such as 1-O-methyl-15-HT, (8Z)-1-O-methyl-15-HT, and O-methyltenellin A are also produced but the enzymes involved in their biosynthesis have still to be determined. The protein is Cytochrome P450 monooxygenase tenB of Beauveria bassiana (White muscardine disease fungus).